The sequence spans 87 residues: Small ribosomal subunit protein uS15 (87 aa).

It belongs to the universal ribosomal protein uS15 family. In terms of assembly, part of the 30S ribosomal subunit. Forms a bridge to the 50S subunit in the 70S ribosome, contacting the 23S rRNA.

In terms of biological role, one of the primary rRNA binding proteins, it binds directly to 16S rRNA where it helps nucleate assembly of the platform of the 30S subunit by binding and bridging several RNA helices of the 16S rRNA. Functionally, forms an intersubunit bridge (bridge B4) with the 23S rRNA of the 50S subunit in the ribosome. This Cutibacterium acnes (strain DSM 16379 / KPA171202) (Propionibacterium acnes) protein is Small ribosomal subunit protein uS15.